The primary structure comprises 478 residues: Sulfate adenylyltransferase subunit 1 (478 aa).

The tr-type G domain occupies 24 to 240 (KSMLRFLTCG…VLEDIDIDAD (217 aa)). The G1 stretch occupies residues 33–40 (GSVDDGKS). 33-40 (GSVDDGKS) contributes to the GTP binding site. Residues 91–95 (GITID) are G2. The interval 112–115 (DTPG) is G3. Residues 112–116 (DTPGH) and 167–170 (NKMD) contribute to the GTP site. Residues 167–170 (NKMD) form a G4 region. Positions 206-208 (SAL) are G5.

Belongs to the TRAFAC class translation factor GTPase superfamily. Classic translation factor GTPase family. CysN/NodQ subfamily. In terms of assembly, heterodimer composed of CysD, the smaller subunit, and CysN.

It catalyses the reaction sulfate + ATP + H(+) = adenosine 5'-phosphosulfate + diphosphate. It functions in the pathway sulfur metabolism; hydrogen sulfide biosynthesis; sulfite from sulfate: step 1/3. Its function is as follows. With CysD forms the ATP sulfurylase (ATPS) that catalyzes the adenylation of sulfate producing adenosine 5'-phosphosulfate (APS) and diphosphate, the first enzymatic step in sulfur assimilation pathway. APS synthesis involves the formation of a high-energy phosphoric-sulfuric acid anhydride bond driven by GTP hydrolysis by CysN coupled to ATP hydrolysis by CysD. The chain is Sulfate adenylyltransferase subunit 1 from Aliivibrio salmonicida (strain LFI1238) (Vibrio salmonicida (strain LFI1238)).